The sequence spans 292 residues: NAD kinase (292 aa).

Catalysis depends on Asp73, which acts as the Proton acceptor. NAD(+) is bound by residues 73–74, 147–148, His158, Arg175, Asp177, 188–193, and Gln247; these read DG, NE, and TAYSLS.

The protein belongs to the NAD kinase family. Requires a divalent metal cation as cofactor.

The protein localises to the cytoplasm. The enzyme catalyses NAD(+) + ATP = ADP + NADP(+) + H(+). Functionally, involved in the regulation of the intracellular balance of NAD and NADP, and is a key enzyme in the biosynthesis of NADP. Catalyzes specifically the phosphorylation on 2'-hydroxyl of the adenosine moiety of NAD to yield NADP. The sequence is that of NAD kinase from Enterobacter sp. (strain 638).